A 1082-amino-acid polypeptide reads, in one-letter code: AP-3 complex subunit beta-2 (1082 aa).

A disordered region spans residues 1-30 (MSAAPAYSEDKGGSAGPGEPEYGHDPASGG). Residues Ser272 and Ser282 each carry the phosphoserine modification. Over residues 666–677 (NREKRKEKEKPF) the composition is skewed to basic and acidic residues. The disordered stretch occupies residues 666–801 (NREKRKEKEK…KTPPGSKSAP (136 aa)). Residues 691-700 (ADSEPESESE) are compositionally biased toward acidic residues. Positions 704 to 715 (KSSSGSGSGESS) are enriched in low complexity. 2 stretches are compositionally biased toward acidic residues: residues 716–726 (SESDNEEEDEE) and 775–784 (VTSESEEEQV).

The protein belongs to the adaptor complexes large subunit family. As to quaternary structure, adaptor protein complex 3 (AP-3) is a heterotetramer composed of two large adaptins (delta-type subunit AP3D1 and beta-type subunit AP3B1 or AP3B2), a medium adaptin (mu-type subunit AP3M1 or AP3M2) and a small adaptin (sigma-type subunit APS1 or AP3S2). AP-3 associates with the BLOC-1 complex.

It is found in the cytoplasmic vesicle. The protein resides in the clathrin-coated vesicle membrane. Its subcellular location is the golgi apparatus. Functionally, subunit of non-clathrin- and clathrin-associated adaptor protein complex 3 (AP-3) that plays a role in protein sorting in the late-Golgi/trans-Golgi network (TGN) and/or endosomes. The AP complexes mediate both the recruitment of clathrin to membranes and the recognition of sorting signals within the cytosolic tails of transmembrane cargo molecules. AP-3 appears to be involved in the sorting of a subset of transmembrane proteins targeted to lysosomes and lysosome-related organelles. In concert with the BLOC-1 complex, AP-3 is required to target cargos into vesicles assembled at cell bodies for delivery into neurites and nerve terminals. This Mus musculus (Mouse) protein is AP-3 complex subunit beta-2 (Ap3b2).